The following is a 264-amino-acid chain: S-adenosylmethionine decarboxylase proenzyme (264 aa).

S112 acts as the Schiff-base intermediate with substrate; via pyruvic acid in catalysis. S112 is subject to Pyruvic acid (Ser); by autocatalysis. The active-site Proton acceptor; for processing activity is H117. C140 (proton donor; for catalytic activity) is an active-site residue.

Belongs to the prokaryotic AdoMetDC family. Type 2 subfamily. As to quaternary structure, heterooctamer of four alpha and four beta chains arranged as a tetramer of alpha/beta heterodimers. Pyruvate serves as cofactor. In terms of processing, is synthesized initially as an inactive proenzyme. Formation of the active enzyme involves a self-maturation process in which the active site pyruvoyl group is generated from an internal serine residue via an autocatalytic post-translational modification. Two non-identical subunits are generated from the proenzyme in this reaction, and the pyruvate is formed at the N-terminus of the alpha chain, which is derived from the carboxyl end of the proenzyme. The post-translation cleavage follows an unusual pathway, termed non-hydrolytic serinolysis, in which the side chain hydroxyl group of the serine supplies its oxygen atom to form the C-terminus of the beta chain, while the remainder of the serine residue undergoes an oxidative deamination to produce ammonia and the pyruvoyl group blocking the N-terminus of the alpha chain.

The enzyme catalyses S-adenosyl-L-methionine + H(+) = S-adenosyl 3-(methylsulfanyl)propylamine + CO2. The protein operates within amine and polyamine biosynthesis; S-adenosylmethioninamine biosynthesis; S-adenosylmethioninamine from S-adenosyl-L-methionine: step 1/1. In terms of biological role, catalyzes the decarboxylation of S-adenosylmethionine to S-adenosylmethioninamine (dcAdoMet), the propylamine donor required for the synthesis of the polyamines spermine and spermidine from the diamine putrescine. The sequence is that of S-adenosylmethionine decarboxylase proenzyme from Enterobacter sp. (strain 638).